Consider the following 376-residue polypeptide: Arf-GAP with dual PH domain-containing protein 2 (376 aa).

Positions 9–130 (KRLLELLQAA…EFMAEKAVSP (122 aa)) constitute an Arf-GAP domain. The C4-type zinc finger occupies 25–48 (CADCGAADPDWASYKLGVFICLHC). PH domains lie at 131–232 (PGDR…AARL) and 254–360 (NYLK…GVLS).

In terms of tissue distribution, expressed in many tissues, with highest levels in fat, heart and skeletal muscle. Also detected in kidney, liver and lung.

Its subcellular location is the cytoplasm. It is found in the cell membrane. GTPase-activating protein for the ADP ribosylation factor family (Potential). Binds phosphatidylinositol 4,5-bisphosphate, phosphatidylinositol 3,4,5-trisphosphate (PtdInsP3) and inositol 1,3,4,5-tetrakisphosphate (InsP4). Binding of phosphatidylinositol 3,5-bisphosphate and phosphatidylinositol 3,4-bisphosphate occurs at a much lower affinity. Possesses a stoichiometry of two binding sites for InsP4 with identical affinity. The sequence is that of Arf-GAP with dual PH domain-containing protein 2 (Adap2) from Rattus norvegicus (Rat).